The primary structure comprises 500 residues: Lycopene beta cyclase, chloroplastic (500 aa).

Residues 1–81 (MDTLLKTPNN…ELPMYDPSKG (81 aa)) constitute a chloroplast transit peptide. 86–114 (LAVVGGGPAGLAVAQQVSEAGLSVCSIDP) provides a ligand contact to NAD(+).

This sequence belongs to the lycopene cyclase family.

The protein localises to the plastid. The protein resides in the chloroplast. It carries out the reaction a carotenoid psi-end group = a carotenoid beta-end derivative. It functions in the pathway carotenoid biosynthesis; beta-carotene biosynthesis. It participates in carotenoid biosynthesis; beta-zeacarotene biosynthesis. Functionally, catalyzes the double cyclization reaction which converts lycopene to beta-carotene and neurosporene to beta-zeacarotene. This chain is Lycopene beta cyclase, chloroplastic (LCY1), found in Solanum lycopersicum (Tomato).